We begin with the raw amino-acid sequence, 38 residues long: Photosystem II reaction center protein L (38 aa).

Residues 17–37 (SLFWGLLLIFILAVLFSSYFF) traverse the membrane as a helical segment.

It belongs to the PsbL family. In terms of assembly, PSII is composed of 1 copy each of membrane proteins PsbA, PsbB, PsbC, PsbD, PsbE, PsbF, PsbH, PsbI, PsbJ, PsbK, PsbL, PsbM, PsbT, PsbX, PsbY, PsbZ, Psb30/Ycf12, at least 3 peripheral proteins of the oxygen-evolving complex and a large number of cofactors. It forms dimeric complexes.

The protein localises to the plastid. It is found in the chloroplast thylakoid membrane. Functionally, one of the components of the core complex of photosystem II (PSII). PSII is a light-driven water:plastoquinone oxidoreductase that uses light energy to abstract electrons from H(2)O, generating O(2) and a proton gradient subsequently used for ATP formation. It consists of a core antenna complex that captures photons, and an electron transfer chain that converts photonic excitation into a charge separation. This subunit is found at the monomer-monomer interface and is required for correct PSII assembly and/or dimerization. This is Photosystem II reaction center protein L from Guillardia theta (Cryptophyte).